We begin with the raw amino-acid sequence, 654 residues long: Acetyl-coenzyme A synthetase (654 aa).

CoA contacts are provided by residues 191 to 194 (RRGQ) and Thr315. Residues 391–393 (GEP), 415–420 (DTWWQT), Asp506, and Arg521 contribute to the ATP site. Position 529 (Ser529) interacts with CoA. Position 532 (Arg532) interacts with ATP. Mg(2+) is bound by residues Val543, His545, and Val548. At Lys615 the chain carries N6-acetyllysine.

It belongs to the ATP-dependent AMP-binding enzyme family. Mg(2+) serves as cofactor. In terms of processing, acetylated. Deacetylation by the SIR2-homolog deacetylase activates the enzyme.

It catalyses the reaction acetate + ATP + CoA = acetyl-CoA + AMP + diphosphate. Catalyzes the conversion of acetate into acetyl-CoA (AcCoA), an essential intermediate at the junction of anabolic and catabolic pathways. AcsA undergoes a two-step reaction. In the first half reaction, AcsA combines acetate with ATP to form acetyl-adenylate (AcAMP) intermediate. In the second half reaction, it can then transfer the acetyl group from AcAMP to the sulfhydryl group of CoA, forming the product AcCoA. This chain is Acetyl-coenzyme A synthetase, found in Gemmatimonas aurantiaca (strain DSM 14586 / JCM 11422 / NBRC 100505 / T-27).